The primary structure comprises 206 residues: FMN-dependent NADH:quinone oxidoreductase (206 aa).

FMN-binding positions include Ser9, 15-17 (SVS), and 139-142 (SRGG).

This sequence belongs to the azoreductase type 1 family. As to quaternary structure, homodimer. FMN is required as a cofactor.

The enzyme catalyses 2 a quinone + NADH + H(+) = 2 a 1,4-benzosemiquinone + NAD(+). The catalysed reaction is N,N-dimethyl-1,4-phenylenediamine + anthranilate + 2 NAD(+) = 2-(4-dimethylaminophenyl)diazenylbenzoate + 2 NADH + 2 H(+). Quinone reductase that provides resistance to thiol-specific stress caused by electrophilic quinones. Its function is as follows. Also exhibits azoreductase activity. Catalyzes the reductive cleavage of the azo bond in aromatic azo compounds to the corresponding amines. The chain is FMN-dependent NADH:quinone oxidoreductase from Cupriavidus necator (strain ATCC 17699 / DSM 428 / KCTC 22496 / NCIMB 10442 / H16 / Stanier 337) (Ralstonia eutropha).